The chain runs to 72 residues: Potassium channel toxin kappa-KTx 5.1 (72 aa).

An N-terminal signal peptide occupies residues 1–23; the sequence is MKLLPLLFVILIVCAILPDEASC. A propeptide spanning residues 24–43 is cleaved from the precursor; sequence DQSELERKEENFKDESREIV. Intrachain disulfides connect cysteine 47/cysteine 64 and cysteine 51/cysteine 60. At histidine 70 the chain carries Histidine amide.

The protein belongs to the short scorpion toxin superfamily. Potassium channel inhibitor kappa-KTx family. Kappa-KTx 5 subfamily. As to expression, expressed by the venom gland.

It localises to the secreted. Functionally, weak blocker of potassium channels Kv1.1/KCNA1 (IC(50)=578.5 nM-9.9 uM) and Kv1.6/KCNA6 (~60% block at 30 uM of toxin). Acts by binding to the pore and occluding it. Has a voltage-dependent mode of action, which can be explained by a high content of basic residues causing repulsions at higher membrane voltages. Shows a weak interaction with muscle-type nicotinic acetylcholine receptors (nAChR), since it inhibits alpha-bungarotoxin binding to muscle-type nAChR from T.californica (IC(50)=1.4 uM). This suggests it probably weakly inhibits muscle nAChR. The mode of binding to potassium channels of this toxin differs from its homologs (including HefuTx1), since it lacks the key aromatic residue of the functional dyad. In contrast, its functionally important site is composed of a number of basic residues. This Heterometrus laoticus (Thai giant scorpion) protein is Potassium channel toxin kappa-KTx 5.1.